The following is a 370-amino-acid chain: WAT1-related protein At1g44800 (370 aa).

10 helical membrane-spanning segments follow: residues 11 to 31 (PILA…ITMV), 41 to 61 (VLAT…ALMF), 67 to 87 (PKMT…EPLM), 102 to 122 (SYTS…ALIF), 142 to 162 (VITV…IEIV), 182 to 202 (WVLG…FFIL), 216 to 236 (LVTL…LIMV), 252 to 272 (AAVY…SIVI), 278 to 298 (VFTT…GALV), and 303 to 323 (IHLG…SVVW). EamA domains are found at residues 23-143 (AGMY…GTVI) and 195-322 (TWAA…YSVV).

This sequence belongs to the drug/metabolite transporter (DMT) superfamily. Plant drug/metabolite exporter (P-DME) (TC 2.A.7.4) family.

The protein localises to the membrane. This Arabidopsis thaliana (Mouse-ear cress) protein is WAT1-related protein At1g44800.